The primary structure comprises 871 residues: Coatomer subunit gamma-2 (871 aa).

Residues 1–11 show a composition bias toward basic and acidic residues; that stretch reads MIKKFDKKDEE. Residues 1 to 20 form a disordered region; sequence MIKKFDKKDEESGSGSNPFR. 6 HEAT repeats span residues 64–101, 283–320, 321–355, 356–392, 395–430, and 467–504; these read TEATEAFFAMTRLFQSNDQTLRRMCYLTIKEMATISED, RELAPAVSVLQLFCSSPKPALRYAAVRTLNKVAMKHPS, AVTACNLDLENLITDSNRSIATLAITTLLKTGSES, SVDRLMKQISSFVSEISDEFKVVVVQAISALCQKYPR, SVMMTFLSNMLRDDGGFEYKRAIVDCIIHIVEENPE, and PVPSKYIRFIFNRVVLENEAVRAAAVSALAKFGAQNEN. Thr-594 is modified (phosphothreonine).

It belongs to the COPG family. In terms of assembly, oligomeric complex. Binds to CDC42. Interacts with JAGN1. Interacts with TMED10 (via cytoplasmic domain).

It localises to the cytoplasm. Its subcellular location is the cytosol. The protein resides in the golgi apparatus membrane. It is found in the cytoplasmic vesicle. The protein localises to the COPI-coated vesicle membrane. In terms of biological role, the coatomer is a cytosolic protein complex that binds to dilysine motifs and reversibly associates with Golgi non-clathrin-coated vesicles, which further mediate biosynthetic protein transport from the ER, via the Golgi up to the trans Golgi network. Coatomer complex is required for budding from Golgi membranes, and is essential for the retrograde Golgi-to-ER transport of dilysine-tagged proteins. In mammals, the coatomer can only be recruited by membranes associated to ADP-ribosylation factors (ARFs), which are small GTP-binding proteins; the complex also influences the Golgi structural integrity, as well as the processing, activity, and endocytic recycling of LDL receptors. The protein is Coatomer subunit gamma-2 (COPG2) of Bos taurus (Bovine).